We begin with the raw amino-acid sequence, 335 residues long: MSQINLLLLCGGGGDEHAISLMSADFLETSLAKEPEINLLRVELDGQGHYRTQDGRSCELTNRKEIRFAAEEQAPWPVDYVIPCIHGFPGETGDIQSYFDLIKLPFFGCDSESSSNCFNKVTAKMWFSALGVPNTPYIFLNELNQESIAQTKQALENWGSIFIKAASQGSSVGCYRVDSQDELVSSLEQAFSFSPYVIVEKTINARELEVAAYELNGEIVATKPGEIICASNTFYSFDEKYAANSKAETKVEADVSEEVAQQIQAYAIKVFKGMKLSHLSRIDFFLTEDNEILLNEINTFPGLTPISMFPKMLQNHGDDFTHYLYSNIKSQLVSA.

The region spanning 124-329 (KMWFSALGVP…FTHYLYSNIK (206 aa)) is the ATP-grasp domain. 154–209 (ALENWGSIFIKAASQGSSVGCYRVDSQDELVSSLEQAFSFSPYVIVEKTINARELE) contacts ATP. Residues Asp283, Glu296, and Asn298 each contribute to the Mg(2+) site.

This sequence belongs to the D-alanine--D-alanine ligase family. It depends on Mg(2+) as a cofactor. Mn(2+) serves as cofactor.

It is found in the cytoplasm. The enzyme catalyses 2 D-alanine + ATP = D-alanyl-D-alanine + ADP + phosphate + H(+). The protein operates within cell wall biogenesis; peptidoglycan biosynthesis. In terms of biological role, cell wall formation. The protein is D-alanine--D-alanine ligase of Shewanella woodyi (strain ATCC 51908 / MS32).